We begin with the raw amino-acid sequence, 299 residues long: MLDRSRLRIAIQKSGRLSKESQQLLEQCGIKINLQQQRLLAFAENMAIDIMRVRDDDIPGLVMDGIVDLGIIGENVLEEALLTRRSQGDNPCYIMLLRLDFGDCRLSMALPIDEPWNGPKSLQGKRIATSYPHLLKQYLDKLGIHFKSCLLNGSVEVAPRAGLADAICDLVSTGATLEANGLHEVEVIYRSKACLIQRSGELSNIKQSLINKLIIRIQGVIQARGSKYIMLHAPAEQLEEIINLLPGAESPTVLPLAGNQHRVAIYMVSNETLFWETMENLKNLGASSILVLPIEKMME.

The protein belongs to the ATP phosphoribosyltransferase family. Long subfamily. As to quaternary structure, equilibrium between an active dimeric form, an inactive hexameric form and higher aggregates. Interconversion between the various forms is largely reversible and is influenced by the natural substrates and inhibitors of the enzyme. Mg(2+) is required as a cofactor.

The protein localises to the cytoplasm. It catalyses the reaction 1-(5-phospho-beta-D-ribosyl)-ATP + diphosphate = 5-phospho-alpha-D-ribose 1-diphosphate + ATP. Its pathway is amino-acid biosynthesis; L-histidine biosynthesis; L-histidine from 5-phospho-alpha-D-ribose 1-diphosphate: step 1/9. Feedback inhibited by histidine. Functionally, catalyzes the condensation of ATP and 5-phosphoribose 1-diphosphate to form N'-(5'-phosphoribosyl)-ATP (PR-ATP). Has a crucial role in the pathway because the rate of histidine biosynthesis seems to be controlled primarily by regulation of HisG enzymatic activity. In Blochmanniella pennsylvanica (strain BPEN), this protein is ATP phosphoribosyltransferase.